A 478-amino-acid chain; its full sequence is Putative indole-3-acetic acid-amido synthetase GH3.10 (478 aa).

It belongs to the IAA-amido conjugating enzyme family.

May catalyze the synthesis of indole-3-acetic acid (IAA)-amino acid conjugates, providing a mechanism for the plant to cope with the presence of excess auxin. This chain is Putative indole-3-acetic acid-amido synthetase GH3.10 (GH3.10), found in Oryza sativa subsp. japonica (Rice).